The sequence spans 277 residues: Undecaprenyl-diphosphatase (277 aa).

The next 8 helical transmembrane spans lie at 11-31 (WWQA…PISS), 47-67 (AGAS…LIYF), 96-116 (VGIL…KAIW), 123-143 (LWVI…AEQT), 153-173 (LGIW…IPGV), 197-217 (SFLL…ISEF), 227-247 (LGTL…IQFL), and 254-274 (LFIV…ALGF).

It belongs to the UppP family.

The protein resides in the cell inner membrane. The catalysed reaction is di-trans,octa-cis-undecaprenyl diphosphate + H2O = di-trans,octa-cis-undecaprenyl phosphate + phosphate + H(+). Functionally, catalyzes the dephosphorylation of undecaprenyl diphosphate (UPP). Confers resistance to bacitracin. This Synechococcus sp. (strain JA-2-3B'a(2-13)) (Cyanobacteria bacterium Yellowstone B-Prime) protein is Undecaprenyl-diphosphatase.